The chain runs to 153 residues: UPF0756 membrane protein LCA_1031 (153 aa).

4 consecutive transmembrane segments (helical) span residues W4 to I24, W52 to F72, F85 to L105, and L115 to I135.

It belongs to the UPF0756 family.

The protein localises to the cell membrane. This chain is UPF0756 membrane protein LCA_1031, found in Latilactobacillus sakei subsp. sakei (strain 23K) (Lactobacillus sakei subsp. sakei).